The chain runs to 427 residues: Light-independent protochlorophyllide reductase subunit N (427 aa).

[4Fe-4S] cluster-binding residues include Cys-29, Cys-54, and Cys-115.

The protein belongs to the BchN/ChlN family. Protochlorophyllide reductase is composed of three subunits; BchL, BchN and BchB. Forms a heterotetramer of two BchB and two BchN subunits. It depends on [4Fe-4S] cluster as a cofactor.

The catalysed reaction is chlorophyllide a + oxidized 2[4Fe-4S]-[ferredoxin] + 2 ADP + 2 phosphate = protochlorophyllide a + reduced 2[4Fe-4S]-[ferredoxin] + 2 ATP + 2 H2O. Its pathway is porphyrin-containing compound metabolism; bacteriochlorophyll biosynthesis (light-independent). Its function is as follows. Component of the dark-operative protochlorophyllide reductase (DPOR) that uses Mg-ATP and reduced ferredoxin to reduce ring D of protochlorophyllide (Pchlide) to form chlorophyllide a (Chlide). This reaction is light-independent. The NB-protein (BchN-BchB) is the catalytic component of the complex. The protein is Light-independent protochlorophyllide reductase subunit N of Bradyrhizobium sp. (strain ORS 278).